The chain runs to 318 residues: Dimethyladenosine transferase (318 aa).

S-adenosyl-L-methionine-binding residues include histidine 37, leucine 39, glycine 64, glutamate 85, aspartate 113, and asparagine 128.

It belongs to the class I-like SAM-binding methyltransferase superfamily. rRNA adenine N(6)-methyltransferase family.

The protein localises to the cytoplasm. Its subcellular location is the nucleus. The protein resides in the nucleolus. It carries out the reaction adenosine(1779)/adenosine(1780) in 18S rRNA + 4 S-adenosyl-L-methionine = N(6)-dimethyladenosine(1779)/N(6)-dimethyladenosine(1780) in 18S rRNA + 4 S-adenosyl-L-homocysteine + 4 H(+). Specifically dimethylates two adjacent adenosines in the loop of a conserved hairpin near the 3'-end of 18S rRNA in the 40S particle. The protein is Dimethyladenosine transferase of Saccharomyces cerevisiae (strain ATCC 204508 / S288c) (Baker's yeast).